Consider the following 128-residue polypeptide: Large ribosomal subunit protein uL22 (128 aa).

Belongs to the universal ribosomal protein uL22 family. As to quaternary structure, part of the 50S ribosomal subunit.

Functionally, this protein binds specifically to 23S rRNA; its binding is stimulated by other ribosomal proteins, e.g. L4, L17, and L20. It is important during the early stages of 50S assembly. It makes multiple contacts with different domains of the 23S rRNA in the assembled 50S subunit and ribosome. In terms of biological role, the globular domain of the protein is located near the polypeptide exit tunnel on the outside of the subunit, while an extended beta-hairpin is found that lines the wall of the exit tunnel in the center of the 70S ribosome. This is Large ribosomal subunit protein uL22 from Methylobacterium radiotolerans (strain ATCC 27329 / DSM 1819 / JCM 2831 / NBRC 15690 / NCIMB 10815 / 0-1).